A 519-amino-acid chain; its full sequence is F-box-like/WD repeat-containing protein TBL1XR1-A (519 aa).

A LisH domain is found at 4–36 (SSDEVNFLVYRYLQESGFSHSAFTFGIESHISQ). One can recognise an F-box-like domain in the interval 41-86 (GALAPPAALISIIQKGLQYVEAEVSINEDGTLFDGRPIESLSLIDA). Residues 115–139 (AAAAAATPNNQQPPAKNGENTANGE) are compositionally biased toward low complexity. Positions 115–147 (AAAAAATPNNQQPPAKNGENTANGEENGGHALA) are disordered. 8 WD repeats span residues 172-211 (GHESEVFICAWNPVSDLLASGSGDSTARIWNLSENSTSGS), 228-267 (PSNKDVTSLDWNSEGTLLATGSYDGFARIWTKDGNLASTL), 269-308 (QHKGPIFALKWNKKGNFILSAGVDKTTIIWDAHTGEAKQQ), 311-349 (FHSAPALDVDWQSNNTFASCSTDMCIHVCKLGQDRPIKT), 352-391 (GHTNEVNAIKWDPTGNLLASCSDDMTLKIWSMKHDTCVHD), 394-442 (AHNK…CIHT), 445-484 (KHQEPVYSVAFSPDGRYLASGSFDKCVHIWNTQTGALVHS), and 486-519 (RGTGGIFEVCWNAAGDKVGASASDGSVCVLDLRK).

This sequence belongs to the WD repeat EBI family. Interacts with heterodimers of rxra and thrb, and this interaction is abrogated by thyroid hormone binding to thrb. Interacts with ncor1.

The protein resides in the nucleus. In terms of biological role, F-box-like protein which acts as an integral component of the N-CoR transcriptional corepressor complex. Probably regulates transcription activation mediated by nuclear receptors. May mediate the recruitment of the 19S proteasome complex, leading to the subsequent proteasomal degradation of the N-CoR complex, thereby allowing cofactor exchange and transcription activation. This chain is F-box-like/WD repeat-containing protein TBL1XR1-A (tbl1xr1-a), found in Xenopus laevis (African clawed frog).